Here is a 158-residue protein sequence, read N- to C-terminus: Transcription elongation factor GreA (158 aa).

Residues 47-74 (AEYHAAKEEQSHNEGRINELEDKLARAD) are a coiled coil.

Belongs to the GreA/GreB family.

Functionally, necessary for efficient RNA polymerase transcription elongation past template-encoded arresting sites. The arresting sites in DNA have the property of trapping a certain fraction of elongating RNA polymerases that pass through, resulting in locked ternary complexes. Cleavage of the nascent transcript by cleavage factors such as GreA or GreB allows the resumption of elongation from the new 3'terminus. GreA releases sequences of 2 to 3 nucleotides. The protein is Transcription elongation factor GreA of Rhodopseudomonas palustris (strain ATCC BAA-98 / CGA009).